We begin with the raw amino-acid sequence, 328 residues long: Serine/threonine protein kinase RdoA (328 aa).

Residue Asp-201 is the Proton acceptor of the active site. Asn-206 and Asp-217 together coordinate Mg(2+). The active site involves Asp-217.

This sequence belongs to the SrkA/RdoA protein kinase family. As to quaternary structure, monomer. The cofactor is Mg(2+).

The protein localises to the cytoplasm. It carries out the reaction L-seryl-[protein] + ATP = O-phospho-L-seryl-[protein] + ADP + H(+). The catalysed reaction is L-threonyl-[protein] + ATP = O-phospho-L-threonyl-[protein] + ADP + H(+). Its function is as follows. A protein kinase that (auto)phosphorylates on Ser and Thr residues, probably involved in the extracytoplasmic stress response. Probably acts to suppress the effects of stress linked to accumulation of reactive oxygen species. The chain is Serine/threonine protein kinase RdoA from Salmonella typhimurium (strain LT2 / SGSC1412 / ATCC 700720).